The sequence spans 1203 residues: Rho GTPase-activating protein gacGG (1203 aa).

RCC1 repeat units lie at residues 52-104 (TGEL…AIME), 106-148 (GLLY…VVAD), 155-204 (KRSV…AIVE), 206-255 (NEVF…ARSG), 257-298 (GNVC…VLSE), 299-359 (KGEI…EGRN), and 361-410 (LSVY…YLRG). Residues 316 to 343 (KLDVNSSPNINSSSGTTTPTTNTTTTTK) are disordered. The segment covering 320 to 343 (NSSPNINSSSGTTTPTTNTTTTTK) has biased composition (low complexity). The Rho-GAP domain occupies 381–594 (VDIAESMRRK…TIMKQYPLME (214 aa)). A coiled-coil region spans residues 649-679 (TLEIKNNQNNQNNQKENNNNNNNINNSNNNN). 3 disordered regions span residues 657–725 (NNQN…TGNI), 746–789 (KDGN…NLSP), and 831–852 (FANS…LIGS). Composition is skewed to low complexity over residues 746-788 (KDGN…PNLS) and 833-852 (NSGS…LIGS). Residues 995-1078 (FDLLEKSMTE…ISNQNLSRVN (84 aa)) are a coiled coil.

The protein localises to the cytoplasm. Rho GTPase-activating protein involved in the signal transduction pathway. The sequence is that of Rho GTPase-activating protein gacGG (gacGG) from Dictyostelium discoideum (Social amoeba).